We begin with the raw amino-acid sequence, 620 residues long: Chaperone protein HscA homolog (620 aa).

Belongs to the heat shock protein 70 family.

Functionally, chaperone involved in the maturation of iron-sulfur cluster-containing proteins. Has a low intrinsic ATPase activity which is markedly stimulated by HscB. The sequence is that of Chaperone protein HscA homolog from Shewanella baltica (strain OS155 / ATCC BAA-1091).